Consider the following 475-residue polypeptide: UDP-glycosyltransferase 84A4 (475 aa).

Histidine 20 functions as the Proton acceptor in the catalytic mechanism. Histidine 20 contributes to the an anthocyanidin binding site. UDP-alpha-D-glucose is bound by residues glutamine 342, histidine 357, tryptophan 360, asparagine 361, serine 362, and glutamate 365. Glycine 380 contacts an anthocyanidin. Positions 381 and 382 each coordinate UDP-alpha-D-glucose.

It belongs to the UDP-glycosyltransferase family.

The catalysed reaction is (E)-4-coumarate + UDP-alpha-D-glucose = 4-O-(beta-D-glucosyl)-trans-4-coumarate + UDP + H(+). It catalyses the reaction (E)-ferulate + UDP-alpha-D-glucose = 1-O-[(E)-feruloyl]-beta-D-glucose + UDP. It carries out the reaction (E)-caffeate + UDP-alpha-D-glucose = 1-O-[(E)-caffeoyl]-beta-D-glucose + UDP. The enzyme catalyses (E)-sinapate + UDP-alpha-D-glucose = 1-O-(trans-sinapoyl)-beta-D-glucose + UDP. The catalysed reaction is (E)-cinnamate + UDP-alpha-D-glucose = 1-O-(trans-cinnamoyl)-beta-D-glucose + UDP. Its function is as follows. UDP-glucosyltransferase that forms glucose esters with phenylpropanoids. Glucosylates 4-coumarate, ferulate, caffeate, sinapate and cinnamate. The protein is UDP-glycosyltransferase 84A4 of Arabidopsis thaliana (Mouse-ear cress).